A 440-amino-acid polypeptide reads, in one-letter code: Xylose isomerase (440 aa).

Catalysis depends on residues His-101 and Asp-104. Mg(2+)-binding residues include Glu-232, Glu-268, His-271, Asp-296, Asp-307, Asp-309, and Asp-339.

This sequence belongs to the xylose isomerase family. In terms of assembly, homotetramer. Requires Mg(2+) as cofactor.

Its subcellular location is the cytoplasm. It catalyses the reaction alpha-D-xylose = alpha-D-xylulofuranose. This Escherichia coli O157:H7 protein is Xylose isomerase.